A 222-amino-acid chain; its full sequence is Protein GrpE (222 aa).

Positions 1 to 82 (MSDFNKDEYL…KADDTLTPLG (82 aa)) are disordered. A compositionally biased stretch (low complexity) spans 20-71 (SGQAAPAAASADSAAAAAGATQEGAAQPAAAQSQENGDSAAADGADKAGAAD).

This sequence belongs to the GrpE family. In terms of assembly, homodimer.

The protein localises to the cytoplasm. In terms of biological role, participates actively in the response to hyperosmotic and heat shock by preventing the aggregation of stress-denatured proteins, in association with DnaK and GrpE. It is the nucleotide exchange factor for DnaK and may function as a thermosensor. Unfolded proteins bind initially to DnaJ; upon interaction with the DnaJ-bound protein, DnaK hydrolyzes its bound ATP, resulting in the formation of a stable complex. GrpE releases ADP from DnaK; ATP binding to DnaK triggers the release of the substrate protein, thus completing the reaction cycle. Several rounds of ATP-dependent interactions between DnaJ, DnaK and GrpE are required for fully efficient folding. In Bifidobacterium adolescentis (strain ATCC 15703 / DSM 20083 / NCTC 11814 / E194a), this protein is Protein GrpE.